A 386-amino-acid chain; its full sequence is MTVASMLSSNSMNVGVSNPKMSSKTSACCLLNRPWPSSCSMSISSCGQFGVSEKSKLLCGAGALQVESAPLFSVGQKFQLDDVIEAQQFDRETLSAIFEVARSMENIRGNSSGSQMLKGYLMATLFYEPSTRTRLSFESAMKRLGGDVLTTENAREFSSAAKGETLEDTIRTVEGYSDIIVLRHFESGAARRAAATANIPVINAGDGPGQHPSQALLDVYTIEREIGKLDGIKVGLVGDLANGRTVRSLAYLLAKYRDVKLYFVSPNVVKMKDDIKEYLTSKGVEWEESSDLMEVASKCDVVYQTRIQKERFGEKLNLYEEARGKYIVNQDVLKVMQNHAVVMHPLPKLDEIEADVDNDPRAAYFRQAKNGLYIRMALLKVLLLGW.

The N-terminal 39 residues, Met-1–Cys-39, are a transit peptide targeting the chloroplast. Carbamoyl phosphate is bound by residues Arg-132 and Thr-133. The UMP site is built by Arg-132 and Thr-133. L-aspartate is bound at residue Lys-162. Carbamoyl phosphate is bound by residues Arg-183, His-211, and Gln-214. Residues Arg-183 and His-211 each coordinate UMP. Residues Arg-244 and Arg-306 each coordinate UMP. Arg-244 and Arg-306 together coordinate L-aspartate. Carbamoyl phosphate is bound by residues Leu-346 and Pro-347.

This sequence belongs to the aspartate/ornithine carbamoyltransferase superfamily. ATCase family. As to quaternary structure, homotrimer.

Its subcellular location is the plastid. It is found in the chloroplast. The enzyme catalyses carbamoyl phosphate + L-aspartate = N-carbamoyl-L-aspartate + phosphate + H(+). Its pathway is pyrimidine metabolism; UMP biosynthesis via de novo pathway; (S)-dihydroorotate from bicarbonate: step 2/3. Feedback inhibited by UMP. Functionally, catalyzes the condensation of carbamoyl phosphate and aspartate to form carbamoyl aspartate and inorganic phosphate, the committed step in the de novo pyrimidine nucleotide biosynthesis pathway. The sequence is that of Aspartate carbamoyltransferase 1, chloroplastic (PYRB1) from Pisum sativum (Garden pea).